The sequence spans 248 residues: Conoporin-Cn1 (248 aa).

The signal sequence occupies residues M1–S23. The interval T45–N64 is N-terminal region. Residues G120, S138, P140, Y167, and Y171 each coordinate phosphocholine.

Belongs to the actinoporin family. Conoidea subfamily. As to quaternary structure, octamer or nonamer in membranes. Monomer in the soluble state. In terms of processing, 9 isoforms are detected in the injectable venom, mainly corresponding to different oxidative states. As to expression, expressed by the venom duct.

The protein localises to the secreted. Its subcellular location is the nematocyst. It is found in the target cell membrane. In terms of biological role, pore-forming protein that forms pores of around 1 nm and causes cardiac stimulation and cytolysis. The protein is Conoporin-Cn1 of Conus consors (Singed cone).